The following is a 568-amino-acid chain: Methyl-accepting chemotaxis protein CtpH (568 aa).

Residues 1–39 lie on the Cytoplasmic side of the membrane; that stretch reads MPASPGHRDVLGCLVAACVPVQPGNPSRRSMLQQSLRAQ. Residues 40–60 form a helical membrane-spanning segment; it reads ILVLLGGSLAALLLIALACFG. Over 61–216 the chain is Periplasmic; that stretch reads SLTGDVRAYR…ISAEARRTML (156 aa). The chain crosses the membrane as a helical span at residues 217 to 237; sequence LGSLVLIGASLAVALLSLWLV. Over 238-568 the chain is Cytoplasmic; the sequence is NRNLVRPVQR…LGDALQRLRA (331 aa). Residues 239-291 enclose the HAMP domain; that stretch reads RNLVRPVQRLIEHIAQLSHGDFGERIEIRRKDELGKLALAANTLRDFLVDIFD. The 237-residue stretch at 296–532 folds into the Methyl-accepting transducer domain; sequence STRDLDSASG…EISRNLTEIA (237 aa).

Belongs to the methyl-accepting chemotaxis (MCP) protein family.

It is found in the cell inner membrane. In terms of biological role, chemotactic-signal transducers respond to changes in the concentration of attractants and repellents in the environment, transduce a signal from the outside to the inside of the cell, and facilitate sensory adaptation through the variation of the level of methylation. Chemoreceptor for inorganic phosphate, which is required for taxis at high concentrations of phosphate. Recognizes inorganic phosphate directly. Can also bind to other components that have a pyrophosphate group, including ATP and ADP. In Pseudomonas aeruginosa (strain ATCC 15692 / DSM 22644 / CIP 104116 / JCM 14847 / LMG 12228 / 1C / PRS 101 / PAO1), this protein is Methyl-accepting chemotaxis protein CtpH.